A 432-amino-acid chain; its full sequence is Ubiquitin-like modifier-activating enzyme 5 (432 aa).

The tract at residues 25 to 47 (ETKKNQTPSVLKGPTVSQERPSA) is disordered. Positions 29–44 (NQTPSVLKGPTVSQER) are enriched in polar residues. 5 residues coordinate ATP: Gly96, Asp117, Lys140, Asn163, and Asn196. Zn(2+) contacts are provided by Cys238 and Cys241. Cys262 serves as the catalytic Glycyl thioester intermediate. Zn(2+)-binding residues include Cys315 and Cys320. The interval 363–406 (DTTEAPSSSAATEVAPGLKFAYEPTQTPKKNSSDNLKLSPSQAV) is disordered. Polar residues predominate over residues 386 to 406 (PTQTPKKNSSDNLKLSPSQAV).

Belongs to the ubiquitin-activating E1 family. UBA5 subfamily. In terms of assembly, interacts with ufc-1.

Its function is as follows. E1-like enzyme which activates ufm-1. Required for interaction between ufm-1 and ufc-1. The sequence is that of Ubiquitin-like modifier-activating enzyme 5 from Caenorhabditis briggsae.